A 249-amino-acid polypeptide reads, in one-letter code: tRNA (guanine-N(1)-)-methyltransferase (249 aa).

S-adenosyl-L-methionine contacts are provided by residues Gly-113 and 133–138; that span reads IGDYVL.

This sequence belongs to the RNA methyltransferase TrmD family. As to quaternary structure, homodimer.

Its subcellular location is the cytoplasm. It catalyses the reaction guanosine(37) in tRNA + S-adenosyl-L-methionine = N(1)-methylguanosine(37) in tRNA + S-adenosyl-L-homocysteine + H(+). Functionally, specifically methylates guanosine-37 in various tRNAs. The chain is tRNA (guanine-N(1)-)-methyltransferase from Aeromonas salmonicida (strain A449).